The sequence spans 644 residues: 3D-(3,5/4)-trihydroxycyclohexane-1,2-dione hydrolase (644 aa).

Glutamate 65 is a thiamine diphosphate binding site. Residues 442-522 (SLPGDLHKVW…INILLFDNAG (81 aa)) form a thiamine pyrophosphate binding region. The Mg(2+) site is built by aspartate 493 and asparagine 520.

This sequence belongs to the TPP enzyme family. Mg(2+) is required as a cofactor. Thiamine diphosphate serves as cofactor.

It catalyses the reaction 3D-3,5/4-trihydroxycyclohexane-1,2-dione + H2O = 5-deoxy-D-glucuronate + H(+). It functions in the pathway polyol metabolism; myo-inositol degradation into acetyl-CoA; acetyl-CoA from myo-inositol: step 3/7. Its function is as follows. Involved in the cleavage of the C1-C2 bond of 3D-(3,5/4)-trihydroxycyclohexane-1,2-dione (THcHDO) to yield 5-deoxy-glucuronate (5DG). This chain is 3D-(3,5/4)-trihydroxycyclohexane-1,2-dione hydrolase, found in Clostridium tetani (strain Massachusetts / E88).